The chain runs to 320 residues: Ferrochelatase (320 aa).

Residues H194 and E275 each contribute to the Fe cation site.

Belongs to the ferrochelatase family. Monomer.

It is found in the cytoplasm. It catalyses the reaction heme b + 2 H(+) = protoporphyrin IX + Fe(2+). The protein operates within porphyrin-containing compound metabolism; protoheme biosynthesis; protoheme from protoporphyrin-IX: step 1/1. Catalyzes the ferrous insertion into protoporphyrin IX. The sequence is that of Ferrochelatase from Escherichia coli (strain SMS-3-5 / SECEC).